The sequence spans 347 residues: MSENSIRLTQYSHGAGCGCKISPKVLETILHSEQAKFVDPNLLVGNETRDDAAVYDLGNGTSVISTTDFFMPIVDNPFDFGRIAATNAISDIFAMGGKPIMAIAILGWPINKLSPEIAREVTEGGRYACRQAGIALAGGHSIDAPEPIFGLAVTGIVPTERVKKNSTAQAGCKLFLTKPLGIGVLTTAEKKSLLKPEHQGLATEVMCRMNIAGASFANIEGVKAMTDVTGFGLLGHLSEMCQGAGVQARVDYDAIPKLPGVEEYIKLGAVPGGTERNFASYGHLMGEMPREVRDLLCDPQTSGGLLLAVMPEAENEVKATAAEFGIELTAIGELVPARGGRAMVEIR.

Cys17 is an active-site residue. ATP-binding positions include Lys20 and 48–50 (TRD). Position 51 (Asp51) interacts with Mg(2+). ATP-binding positions include Asp68, Asp91, and 139–141 (GHS). Asp91 is a Mg(2+) binding site. Asp227 is a Mg(2+) binding site.

Belongs to the selenophosphate synthase 1 family. Class I subfamily. In terms of assembly, homodimer. Requires Mg(2+) as cofactor.

The catalysed reaction is hydrogenselenide + ATP + H2O = selenophosphate + AMP + phosphate + 2 H(+). Synthesizes selenophosphate from selenide and ATP. In Escherichia coli O157:H7, this protein is Selenide, water dikinase.